An 85-amino-acid polypeptide reads, in one-letter code: Putative transmembrane protein ORF28 (85 aa).

2 consecutive transmembrane segments (helical) span residues 32 to 52 and 59 to 79; these read IMLL…VQIV and LLSV…MLGI.

The protein resides in the host membrane. The protein is Putative transmembrane protein ORF28 of Haloarcula hispanica (His1V).